The primary structure comprises 260 residues: Thiazole synthase (260 aa).

Lys-102 serves as the catalytic Schiff-base intermediate with DXP. Residues Gly-163, 189 to 190, and 211 to 212 each bind 1-deoxy-D-xylulose 5-phosphate; these read AG and NT.

The protein belongs to the ThiG family. As to quaternary structure, homotetramer. Forms heterodimers with either ThiH or ThiS.

It localises to the cytoplasm. It carries out the reaction [ThiS sulfur-carrier protein]-C-terminal-Gly-aminoethanethioate + 2-iminoacetate + 1-deoxy-D-xylulose 5-phosphate = [ThiS sulfur-carrier protein]-C-terminal Gly-Gly + 2-[(2R,5Z)-2-carboxy-4-methylthiazol-5(2H)-ylidene]ethyl phosphate + 2 H2O + H(+). It participates in cofactor biosynthesis; thiamine diphosphate biosynthesis. Catalyzes the rearrangement of 1-deoxy-D-xylulose 5-phosphate (DXP) to produce the thiazole phosphate moiety of thiamine. Sulfur is provided by the thiocarboxylate moiety of the carrier protein ThiS. In vitro, sulfur can be provided by H(2)S. This Geobacter sulfurreducens (strain ATCC 51573 / DSM 12127 / PCA) protein is Thiazole synthase.